The chain runs to 317 residues: Melanocyte-stimulating hormone receptor (317 aa).

Topologically, residues 1-37 are extracellular; the sequence is MPVQGSQRRLLGSLNSTPTATPRLGLAANQTGARCLE. A glycan (N-linked (GlcNAc...) asparagine) is linked at N29. A helical membrane pass occupies residues 38–63; that stretch reads VSIPDGLFLSLGLVSLVENVLVVVAI. The Cytoplasmic portion of the chain corresponds to 64 to 72; sequence ARNRNLHSP. A helical transmembrane segment spans residues 73–93; that stretch reads MYCFICCLALSDLLVSGSNML. Residues 94–118 are Extracellular-facing; that stretch reads ETAVILLLEAGALAARAAVVQQLDN. Residues 119–140 traverse the membrane as a helical segment; that stretch reads VIDVITCSSMLSSLCFLGAIAV. The Cytoplasmic portion of the chain corresponds to 141-163; sequence DRYISIFYALRYHSIVTLRRARR. Residues 164–183 form a helical membrane-spanning segment; that stretch reads VVAAIWVASVLFSTLFIAYC. Topologically, residues 184 to 191 are extracellular; that stretch reads DHAAVLLS. A helical transmembrane segment spans residues 192-211; the sequence is LVVFFLAMLVLMAVLYVHML. At 212-240 the chain is on the cytoplasmic side; the sequence is ARACQHAQGIAQLHKRQRPAHQGVGLKGA. Residues 241–266 form a helical membrane-spanning segment; that stretch reads ATLTILLGIFFLCWGPFFLHLTLIVL. At 267–279 the chain is on the extracellular side; that stretch reads CPQHPTCSCIFKN. The helical transmembrane segment at 280–300 threads the bilayer; sequence FNLFLTLIICNAIIDPLIYAF. Topologically, residues 301-317 are cytoplasmic; that stretch reads RSQELRRTLKKVLLCSW. The S-palmitoyl cysteine moiety is linked to residue C315.

This sequence belongs to the G-protein coupled receptor 1 family. As to quaternary structure, interacts with MGRN1, but does not undergo MGRN1-mediated ubiquitination; this interaction competes with GNAS-binding and thus inhibits agonist-induced cAMP production. Interacts with OPN3; the interaction results in a decrease in MC1R-mediated cAMP signaling and ultimately a decrease in melanin production in melanocytes.

It localises to the cell membrane. In terms of biological role, receptor for MSH (alpha, beta and gamma) and ACTH. The activity of this receptor is mediated by G proteins which activate adenylate cyclase. Mediates melanogenesis, the production of eumelanin (black/brown) and phaeomelanin (red/yellow), via regulation of cAMP signaling in melanocytes. The protein is Melanocyte-stimulating hormone receptor (MC1R) of Trachypithecus auratus (Javan langur).